The following is a 134-amino-acid chain: Transmembrane protein 100 (134 aa).

The next 2 helical transmembrane spans lie at 56–76 (CIIPFAVVVFIAGIVVTAVAY) and 84–104 (IISIFGLVVLSSGLFLLASSA). The residue at position 121 (Ser-121) is a Phosphoserine.

In terms of assembly, interacts (via C-terminus) with TRPA1 and TRPV1. Interacts with TASOR. Expressed in neurons of the myenteric and submucosal plexuses in the gastric body, jejunum and proximal colon. Expressed in arterial endothelial cells and neurons of the central nervous system and peripheral nervous system. Expressed in umbilical artery endothelial cells (at protein level).

Its subcellular location is the cell membrane. The protein localises to the membrane. It is found in the perikaryon. It localises to the cytoplasm. The protein resides in the perinuclear region. Its subcellular location is the endoplasmic reticulum. In terms of biological role, plays a role during embryonic arterial endothelium differentiation and vascular morphogenesis through the ACVRL1 receptor-dependent signaling pathway upon stimulation by bone morphogenetic proteins, such as GDF2/BMP9 and BMP10. Involved in the regulation of nociception, acting as a modulator of the interaction between TRPA1 and TRPV1, two molecular sensors and mediators of pain signals in dorsal root ganglia (DRG) neurons. Mechanistically, it weakens their interaction, thereby releasing the inhibition of TRPA1 by TRPV1 and increasing the single-channel open probability of the TRPA1-TRPV1 complex. The polypeptide is Transmembrane protein 100 (TMEM100) (Homo sapiens (Human)).